A 516-amino-acid polypeptide reads, in one-letter code: Apolipoprotein N-acyltransferase (516 aa).

Helical transmembrane passes span 23-43 (ILILLLAAALAGAFTLFAFAP), 68-88 (AFWLGYAWGLGAYVSNFRWIY), 94-114 (VAGLPAWIAAPLVLLLPAYLA), 135-155 (WLLAFPAAWELGEWLRGWVMT), and 178-198 (LGGIHLVNYLVALSAAALAML). The 241-residue stretch at 241–481 (AQGNIAQELK…VLTGFAQSRQ (241 aa)) folds into the CN hydrolase domain. The active-site Proton acceptor is glutamate 279. Residue lysine 339 is part of the active site. Cysteine 391 (nucleophile) is an active-site residue. The chain crosses the membrane as a helical span at residues 489–509 (FGNLPVVLGCGALLLLALLLG).

Belongs to the CN hydrolase family. Apolipoprotein N-acyltransferase subfamily.

The protein resides in the cell inner membrane. The catalysed reaction is N-terminal S-1,2-diacyl-sn-glyceryl-L-cysteinyl-[lipoprotein] + a glycerophospholipid = N-acyl-S-1,2-diacyl-sn-glyceryl-L-cysteinyl-[lipoprotein] + a 2-acyl-sn-glycero-3-phospholipid + H(+). It functions in the pathway protein modification; lipoprotein biosynthesis (N-acyl transfer). Its function is as follows. Catalyzes the phospholipid dependent N-acylation of the N-terminal cysteine of apolipoprotein, the last step in lipoprotein maturation. This Chromobacterium violaceum (strain ATCC 12472 / DSM 30191 / JCM 1249 / CCUG 213 / NBRC 12614 / NCIMB 9131 / NCTC 9757 / MK) protein is Apolipoprotein N-acyltransferase.